The chain runs to 764 residues: Tyrosine-protein phosphatase corkscrew (764 aa).

Positions 1–95 (WFHGNLSGKE…GTVVHLRQPF (95 aa)) constitute an SH2 domain. A Tyrosine-protein phosphatase domain is found at 117-522 (FWEEFESLQQ…KFVYYAVQHY (406 aa)). Residues 174–325 (IRLPTDGDLY…LNGEGNQFKT (152 aa)) form a PTPase insert (Cys/Ser-rich) region. Residues 246–273 (SKHKRSESMSASANASAAGTGPGTPTAA) are disordered. Residues 255–273 (SASANASAAGTGPGTPTAA) show a composition bias toward low complexity. Residues D422, 460–466 (CSAGIGR), and Q507 each bind substrate. The Phosphocysteine intermediate role is filled by C460. Residues 599–666 (AAKLQPPLPP…NANGNGNILG (68 aa)) are disordered. The span at 612 to 666 (SNNNNSSGNSGSYCNSSSSTSTAQHNGVVSSSNNCSSGSGSANSSNANGNGNILG) shows a compositional bias: low complexity.

This sequence belongs to the protein-tyrosine phosphatase family. Non-receptor class subfamily.

It is found in the cytoplasm. The enzyme catalyses O-phospho-L-tyrosyl-[protein] + H2O = L-tyrosyl-[protein] + phosphate. Its function is as follows. Required in all receptor tyrosine kinase signaling pathways. Functions downstream of the receptor tyrosine kinase torso, acting in concert with D-Raf via tailless. Also functions downstream of Egfr (epidermal growth factor receptor) and btl (fibroblast growth factor receptor). The SH2 domain suggests that csw effects its role by mediating heteromeric protein interactions. Maternally required for normal determination of cell fates at the termini of the embryo. Required for cell fate specification of the ventral ectoderm, in the developing embryonic CNS and for embryonic tracheal cell migration. Functions during imaginal development for proper formation of adult structures such as eyes, aristae, L5 wing vein and the tarsal claw. The chain is Tyrosine-protein phosphatase corkscrew (csw) from Drosophila virilis (Fruit fly).